Reading from the N-terminus, the 518-residue chain is Ribonuclease Y (518 aa).

A helical transmembrane segment spans residues 2–22 (GSIIISALLALVIGAVVGFFV). Positions 208-271 (TVSVVNLPND…ETARIALDKL (64 aa)) constitute a KH domain. The region spanning 334–427 (VLKHSVEVAF…VAAADALSAA (94 aa)) is the HD domain.

This sequence belongs to the RNase Y family.

The protein resides in the cell membrane. In terms of biological role, endoribonuclease that initiates mRNA decay. This is Ribonuclease Y from Geobacillus kaustophilus (strain HTA426).